The sequence spans 459 residues: MSEINVMERTRELVVNPLVTCQPFGAMFATLGIRRGLPIVHGSQGCSTFVRYGLNRHFREPAEIAVTSLHEDAAVFGGRSNLIDGVKNLVKRFRPELVGIVTTCSSEITGDDVDGFLRVAEAELREELGERFRTRMVSISTPSFVEHHLRGYGNALKSFIDTLAVDEGDCNERINLIPGIVNPGDIREIRHIFELMDVDPIILTDTSDPFDSPLRPSKTEKMPFYPKGGTVVSDIEESSNSIGTLSMSMYGNEASETLKKRFNIPKEHHIPIGVRNTDDFVRSLARIAEVDVSEELLDERGILIDSMADISSRYLFGRTAAVYGDPDMVMGVSRFLCELGITPLYACVGVDNEIFREGMKRVASEADERINVMINSDLRALERELTEEPVDFMIGNSDGRLIARDLGIPLVRMGFPVYDRVGYHRIPVVGYRGSVNLLNRITNTVLREYYEPQHWKLQQ.

Residues Cys21, Cys46, Cys104, and Ser143 each contribute to the [8Fe-7S] cluster site.

Belongs to the NifD/NifK/NifE/NifN family. As to quaternary structure, tetramer of two alpha and two beta chains. Forms complex with the iron protein (nitrogenase component 2). Requires [8Fe-7S] cluster as cofactor.

The enzyme catalyses N2 + 8 reduced [2Fe-2S]-[ferredoxin] + 16 ATP + 16 H2O = H2 + 8 oxidized [2Fe-2S]-[ferredoxin] + 2 NH4(+) + 16 ADP + 16 phosphate + 6 H(+). In terms of biological role, this molybdenum-iron protein is part of the nitrogenase complex that catalyzes the key enzymatic reactions in nitrogen fixation. The chain is Nitrogenase molybdenum-iron protein beta chain (nifK) from Methanothermobacter thermautotrophicus (strain ATCC 29096 / DSM 1053 / JCM 10044 / NBRC 100330 / Delta H) (Methanobacterium thermoautotrophicum).